The primary structure comprises 118 residues: Ribonuclease P protein component (118 aa).

Belongs to the RnpA family. Consists of a catalytic RNA component (M1 or rnpB) and a protein subunit.

It catalyses the reaction Endonucleolytic cleavage of RNA, removing 5'-extranucleotides from tRNA precursor.. In terms of biological role, RNaseP catalyzes the removal of the 5'-leader sequence from pre-tRNA to produce the mature 5'-terminus. It can also cleave other RNA substrates such as 4.5S RNA. The protein component plays an auxiliary but essential role in vivo by binding to the 5'-leader sequence and broadening the substrate specificity of the ribozyme. The protein is Ribonuclease P protein component of Shewanella sp. (strain ANA-3).